Here is a 559-residue protein sequence, read N- to C-terminus: Spermidine/putrescine import ATP-binding protein PotA (559 aa).

Positions 7–448 constitute an ABC transporter domain; that stretch reads IEIEGLNKTF…PKTEWIANFI (442 aa). 40-47 contributes to the ATP binding site; the sequence is GPSGCGKT. The tract at residues 108 to 317 is insert; it reads WTKLDEIPKL…EAFEKRYLSR (210 aa).

Belongs to the ABC transporter superfamily. Spermidine/putrescine importer (TC 3.A.1.11.1) family. In terms of assembly, the complex is composed of two ATP-binding proteins (PotA), two transmembrane proteins (PotB and PotC) and a solute-binding protein (PotD).

It is found in the cell membrane. It carries out the reaction ATP + H2O + polyamine-[polyamine-binding protein]Side 1 = ADP + phosphate + polyamineSide 2 + [polyamine-binding protein]Side 1.. Its function is as follows. Part of the ABC transporter complex PotABCD involved in spermidine/putrescine import. Responsible for energy coupling to the transport system. The polypeptide is Spermidine/putrescine import ATP-binding protein PotA (Mycoplasma genitalium (strain ATCC 33530 / DSM 19775 / NCTC 10195 / G37) (Mycoplasmoides genitalium)).